A 277-amino-acid polypeptide reads, in one-letter code: 2,3,4,5-tetrahydropyridine-2,6-dicarboxylate N-succinyltransferase (277 aa).

Substrate is bound by residues Arg106 and Asp143.

This sequence belongs to the transferase hexapeptide repeat family. Homotrimer.

The protein localises to the cytoplasm. It catalyses the reaction (S)-2,3,4,5-tetrahydrodipicolinate + succinyl-CoA + H2O = (S)-2-succinylamino-6-oxoheptanedioate + CoA. Its pathway is amino-acid biosynthesis; L-lysine biosynthesis via DAP pathway; LL-2,6-diaminopimelate from (S)-tetrahydrodipicolinate (succinylase route): step 1/3. This is 2,3,4,5-tetrahydropyridine-2,6-dicarboxylate N-succinyltransferase from Variovorax paradoxus (strain S110).